Here is a 465-residue protein sequence, read N- to C-terminus: tRNA modification GTPase MnmE (465 aa).

Arg21, Glu85, and Lys124 together coordinate (6S)-5-formyl-5,6,7,8-tetrahydrofolate. Positions 220-387 (GVPVAIIGET…LQQRLVAAAH (168 aa)) constitute a TrmE-type G domain. Asn230 contacts K(+). Residues 230-235 (NAGKST), 249-255 (SDIHGTT), and 274-277 (DTAG) contribute to the GTP site. Position 234 (Ser234) interacts with Mg(2+). K(+) contacts are provided by Ser249, Ile251, and Thr254. Thr255 serves as a coordination point for Mg(2+). Lys465 contributes to the (6S)-5-formyl-5,6,7,8-tetrahydrofolate binding site.

It belongs to the TRAFAC class TrmE-Era-EngA-EngB-Septin-like GTPase superfamily. TrmE GTPase family. In terms of assembly, homodimer. Heterotetramer of two MnmE and two MnmG subunits. K(+) serves as cofactor.

It is found in the cytoplasm. In terms of biological role, exhibits a very high intrinsic GTPase hydrolysis rate. Involved in the addition of a carboxymethylaminomethyl (cmnm) group at the wobble position (U34) of certain tRNAs, forming tRNA-cmnm(5)s(2)U34. The polypeptide is tRNA modification GTPase MnmE (Bacteroides fragilis (strain ATCC 25285 / DSM 2151 / CCUG 4856 / JCM 11019 / LMG 10263 / NCTC 9343 / Onslow / VPI 2553 / EN-2)).